Here is a 624-residue protein sequence, read N- to C-terminus: ERAD-associated E3 ubiquitin-protein ligase ASI1 (624 aa).

Residues 1 to 69 lie on the Perinuclear space side of the membrane; it reads MNSSTSSENV…SEEIPPTLRS (69 aa). N-linked (GlcNAc...) asparagine glycosylation is found at asparagine 2, asparagine 19, and asparagine 29. The chain crosses the membrane as a helical span at residues 70-90; the sequence is VFDTIGFFFSPYAIFCFVIAI. Topologically, residues 91–116 are nuclear; the sequence is VLNRFVVFYAVLNNGSRRTLPLWLSN. The helical transmembrane segment at 117–137 threads the bilayer; that stretch reads VFHVSAVVVLAMVSLGPLTLG. Over 138–152 the chain is Perinuclear space; the sequence is KDFKILGDPAFAQEK. A helical transmembrane segment spans residues 153–173; sequence FLLNIFYAFAYSYCVETIFTI. Topologically, residues 174–209 are nuclear; sequence MRNSSPLEGTDYSLFELSIQFYTMTNNNTKFLDSPD. The helical transmembrane segment at 210–230 threads the bilayer; that stretch reads YIIDCSMAILSRILIHLVEIF. Residues 231-273 are Perinuclear space-facing; it reads RLRNYRLLFSTIMNLCHICYLGIRVKQGGWKSLPFSVKFRHFP. Residues 274 to 294 traverse the membrane as a helical segment; it reads KLFSVSIICLSLLIFKLSCLI. Residues 295–624 are Nuclear-facing; the sequence is RWDPFGKSRN…CKVHPVSDSK (330 aa). A disordered region spans residues 467–490; sequence TSDDEYSEDYEPSEVESLGDSDEE. Acidic residues predominate over residues 468 to 490; the sequence is SDDEYSEDYEPSEVESLGDSDEE. Residues 568–608 form an RING-type; atypical zinc finger; the sequence is CAVCKVNERNTVLWPCRCFAICEDCRISLGLRGFSTCVCCR.

In terms of assembly, component of the Asi complex, which contains ASI1, ASI2 and ASI3. Interacts directly with ASI3. In terms of processing, glycosylation is not required for ASI1 function.

The protein localises to the nucleus inner membrane. The catalysed reaction is S-ubiquitinyl-[E2 ubiquitin-conjugating enzyme]-L-cysteine + [acceptor protein]-L-lysine = [E2 ubiquitin-conjugating enzyme]-L-cysteine + N(6)-ubiquitinyl-[acceptor protein]-L-lysine.. E3 ubiquitin-protein ligase which transfers ubiquitin to substrates promoting their degradation. Part of the nuclear inner membrane (INM)-specific branch of the ER-associated degradation (ERAD) pathway, required for the elimination of misfolded proteins in the INM, a specialized ER subdomain. Required for ERG11 degradation. Negative regulator of SPS-sensor signaling. Together with ASI2 and ASI3, prevents the unprocessed precursor forms of STP1 and STP2 that escape cytoplasmic anchoring from inducing SPS-sensor-regulated genes in the absence of inducing signals. Controls amino acid permease (AAP) gene expression in response to amino acid availability, a process mediated by the transcription factors STP1 and STP1. In Saccharomyces cerevisiae (strain ATCC 204508 / S288c) (Baker's yeast), this protein is ERAD-associated E3 ubiquitin-protein ligase ASI1 (ASI1).